The following is a 77-amino-acid chain: Translation initiation factor IF-1, chloroplastic (77 aa).

The S1-like domain maps to 1-71; the sequence is MKEQKWIHEG…TRGRIIYRLR (71 aa).

The protein belongs to the IF-1 family. In terms of assembly, component of the 30S ribosomal translation pre-initiation complex which assembles on the 30S ribosome in the order IF-2 and IF-3, IF-1 and N-formylmethionyl-tRNA(fMet); mRNA recruitment can occur at any time during PIC assembly.

The protein localises to the plastid. It is found in the chloroplast. One of the essential components for the initiation of protein synthesis. Stabilizes the binding of IF-2 and IF-3 on the 30S subunit to which N-formylmethionyl-tRNA(fMet) subsequently binds. Helps modulate mRNA selection, yielding the 30S pre-initiation complex (PIC). Upon addition of the 50S ribosomal subunit IF-1, IF-2 and IF-3 are released leaving the mature 70S translation initiation complex. The sequence is that of Translation initiation factor IF-1, chloroplastic from Spinacia oleracea (Spinach).